Here is a 92-residue protein sequence, read N- to C-terminus: Small ribosomal subunit protein uS19 (92 aa).

It belongs to the universal ribosomal protein uS19 family.

Its function is as follows. Protein S19 forms a complex with S13 that binds strongly to the 16S ribosomal RNA. This Allorhizobium ampelinum (strain ATCC BAA-846 / DSM 112012 / S4) (Agrobacterium vitis (strain S4)) protein is Small ribosomal subunit protein uS19.